Reading from the N-terminus, the 957-residue chain is Glycine dehydrogenase (decarboxylating) (957 aa).

At Lys-708 the chain carries N6-(pyridoxal phosphate)lysine.

Belongs to the GcvP family. In terms of assembly, the glycine cleavage system is composed of four proteins: P, T, L and H. It depends on pyridoxal 5'-phosphate as a cofactor.

It catalyses the reaction N(6)-[(R)-lipoyl]-L-lysyl-[glycine-cleavage complex H protein] + glycine + H(+) = N(6)-[(R)-S(8)-aminomethyldihydrolipoyl]-L-lysyl-[glycine-cleavage complex H protein] + CO2. Its function is as follows. The glycine cleavage system catalyzes the degradation of glycine. The P protein binds the alpha-amino group of glycine through its pyridoxal phosphate cofactor; CO(2) is released and the remaining methylamine moiety is then transferred to the lipoamide cofactor of the H protein. The chain is Glycine dehydrogenase (decarboxylating) from Salmonella heidelberg (strain SL476).